The primary structure comprises 542 residues: 4-coumarate--CoA ligase-like 1 (542 aa).

ATP-binding residues include serine 189, serine 190, glycine 191, threonine 192, threonine 193, and lysine 197. A (E)-4-coumaroyl-AMP-binding site is contributed by tyrosine 237. Arginine 258 provides a ligand contact to CoA. The interval 260-331 (DLRIFLNALI…AKFPNVQVQE (72 aa)) is SBD1. 4 residues coordinate (E)-4-coumaroyl-AMP: alanine 309, glutamate 331, alanine 332, and threonine 336. 5 residues coordinate ATP: glutamate 331, alanine 332, threonine 336, aspartate 420, and arginine 435. An SBD2 region spans residues 332–399 (AYGLTEHSCI…VRSQCVMQGY (68 aa)). Residues lysine 437 and lysine 441 each coordinate (E)-4-coumaroyl-AMP. Residues lysine 443 and glycine 444 each coordinate CoA. Lysine 526 is a binding site for ATP.

It belongs to the ATP-dependent AMP-binding enzyme family. Interacts with TKPR1, PKSA and PKSB. Mg(2+) serves as cofactor. Mostly confined to anther tapetal cells.

It localises to the endoplasmic reticulum. The enzyme catalyses (E)-4-coumarate + ATP + CoA = (E)-4-coumaroyl-CoA + AMP + diphosphate. The catalysed reaction is (E)-4-coumarate + ATP + H(+) = (E)-4-coumaroyl-AMP + diphosphate. It carries out the reaction (E)-4-coumaroyl-AMP + CoA = (E)-4-coumaroyl-CoA + AMP + H(+). Its function is as follows. Carboxylate--CoA ligase that may use 4-coumarate as substrate. Follows a two-step reaction mechanism, wherein the carboxylate substrate first undergoes adenylation by ATP, followed by a thioesterification in the presence of CoA to yield the final CoA thioester. The protein is 4-coumarate--CoA ligase-like 1 of Arabidopsis thaliana (Mouse-ear cress).